The following is a 448-amino-acid chain: Omega-6 fatty acid desaturase, chloroplastic (448 aa).

The N-terminal 69 residues, 1-69 (MASRIADSLF…VKRRIGCIKA (69 aa)), are a transit peptide targeting the chloroplast. N-acetylvaline is present on Val-70. The next 2 helical transmembrane spans lie at 124–144 (LKAL…LFMI) and 149–169 (WYLL…FFVI). The Histidine box-1 motif lies at 171 to 175 (HDCAH). The Histidine box-2 signature appears at 207 to 211 (HDRHH). Helical transmembrane passes span 282 to 302 (VFAF…ILGW) and 303 to 323 (VKFW…FTMV). The Histidine box-3 motif lies at 367–371 (HIPHH).

This sequence belongs to the fatty acid desaturase type 1 family.

It localises to the plastid. Its subcellular location is the chloroplast inner membrane. The enzyme catalyses a (9Z)-octadecenoyl-containing glycerolipid + 2 reduced [2Fe-2S]-[ferredoxin] + O2 + 2 H(+) = a (9Z,12Z)-octadecadienoyl-containing glycerolipid + 2 oxidized [2Fe-2S]-[ferredoxin] + 2 H2O. It participates in lipid metabolism; polyunsaturated fatty acid biosynthesis. In terms of biological role, chloroplast omega-6 fatty acid desaturase introduces the second double bond in the biosynthesis of 16:3 and 18:3 fatty acids, important constituents of plant membranes. It is thought to use ferredoxin as an electron donor and to act on fatty acids esterified to galactolipids, sulfolipids and phosphatidylglycerol. In Arabidopsis thaliana (Mouse-ear cress), this protein is Omega-6 fatty acid desaturase, chloroplastic.